A 448-amino-acid polypeptide reads, in one-letter code: Protein giant (448 aa).

Disordered regions lie at residues 23–47, 83–134, 238–259, and 298–363; these read MHHH…LPVQ, QQHQ…ASPT, VEAT…RPFK, and IRSS…TSSS. The span at 30–47 shows a compositional bias: low complexity; sequence HHQQQPLHHLPHSQLPVQ. Basic and acidic residues predominate over residues 100–112; sequence DLSRRCDSVETPR. A compositionally biased stretch (low complexity) spans 115–134; sequence PSPYQTSYSYGSGSPSASPT. Residues 298–310 show a composition bias toward polar residues; that stretch reads IRSSNGGSRTVTN. Residues 318–333 show a composition bias toward low complexity; that stretch reads SRSGSVNEGSSSNNNS. The bZIP domain maps to 384–447; sequence DAAYYERRRK…AAFTSAKVTT (64 aa). The tract at residues 390-406 is basic motif; it reads RRRKNNAAAKKSRDRRR. Positions 407-414 are leucine-zipper; the sequence is IKEDEIAI.

Belongs to the bZIP family. As to quaternary structure, homodimer or heterodimer. Post-translationally, phosphorylated at multiple sites.

It is found in the nucleus. Functionally, represses the expression of both the krueppel and knirps segmentation gap genes. Binds, in vitro, to the krueppel regulatory elements CD1 and CD2. It is required in the early embryo for the development of portions of the head and abdomen. The polypeptide is Protein giant (gt) (Drosophila melanogaster (Fruit fly)).